Reading from the N-terminus, the 360-residue chain is Chorismate synthase (360 aa).

Arginine 47 lines the NADP(+) pocket. FMN is bound by residues arginine 124–serine 126, asparagine 240–alanine 241, glycine 285, lysine 300–threonine 304, and arginine 326.

It belongs to the chorismate synthase family. In terms of assembly, homotetramer. FMNH2 is required as a cofactor.

The enzyme catalyses 5-O-(1-carboxyvinyl)-3-phosphoshikimate = chorismate + phosphate. Its pathway is metabolic intermediate biosynthesis; chorismate biosynthesis; chorismate from D-erythrose 4-phosphate and phosphoenolpyruvate: step 7/7. Functionally, catalyzes the anti-1,4-elimination of the C-3 phosphate and the C-6 proR hydrogen from 5-enolpyruvylshikimate-3-phosphate (EPSP) to yield chorismate, which is the branch point compound that serves as the starting substrate for the three terminal pathways of aromatic amino acid biosynthesis. This reaction introduces a second double bond into the aromatic ring system. The polypeptide is Chorismate synthase (Cytophaga hutchinsonii (strain ATCC 33406 / DSM 1761 / CIP 103989 / NBRC 15051 / NCIMB 9469 / D465)).